A 192-amino-acid chain; its full sequence is Erythropoietin (192 aa).

An N-terminal signal peptide occupies residues methionine 1–glycine 27. Intrachain disulfides connect cysteine 34/cysteine 187 and cysteine 56/cysteine 60. Asparagine 51 carries an N-linked (GlcNAc...) asparagine glycan. Asparagine 65 and asparagine 110 each carry an N-linked (GlcNAc...) asparagine glycan. An O-linked (GalNAc...) serine glycan is attached at serine 152.

Belongs to the EPO/TPO family. In terms of tissue distribution, produced by kidney or liver of adult mammals and by liver of fetal or neonatal mammals.

It localises to the secreted. Its function is as follows. Hormone involved in the regulation of erythrocyte proliferation and differentiation and the maintenance of a physiological level of circulating erythrocyte mass. Binds to EPOR leading to EPOR dimerization and JAK2 activation thereby activating specific downstream effectors, including STAT1 and STAT3. This is Erythropoietin (EPO) from Macaca mulatta (Rhesus macaque).